Reading from the N-terminus, the 80-residue chain is Raniseptin-1 (80 aa).

Positions 1-22 are cleaved as a signal peptide; sequence MAFLKKSLFLVLFLGIVSLSIC. Residues 23–49 constitute a propeptide that is removed on maturation; it reads EEEKREGEEEEKQEEENEELSEEELRE.

The protein belongs to the frog skin active peptide (FSAP) family. Dermaseptin subfamily. In terms of tissue distribution, expressed by the skin glands.

It is found in the secreted. Has antibacterial activity against the Gram-negative bacteria E.coli ATCC 25922 (MIC=5 uM), P.aeruginosa ATCC 27853 (MIC=10 uM) and X.citri (MIC&lt; 2 uM), and the Gram-positive bacterium S.aureus ATCC 29313 (MIC=20 uM). Does not have hemolytic activity against human erythrocytes. In Boana raniceps (Chaco tree frog), this protein is Raniseptin-1.